The following is a 364-amino-acid chain: GDP-fucose transporter 1 (364 aa).

8 helical membrane-spanning segments follow: residues 34-56, 76-98, 111-130, 140-162, 167-185, 195-214, 227-249, and 264-286; these read FLLR…ISMV, VTFY…AACC, LRVA…MITF, VAFY…YLLL, SFYA…WLGV, SWLG…LNAI, IWRL…LLLL, and AHFW…VTGL.

This sequence belongs to the TPT transporter family. SLC35C subfamily.

The protein localises to the golgi apparatus membrane. It carries out the reaction GMP(out) + GDP-beta-L-fucose(in) = GMP(in) + GDP-beta-L-fucose(out). Functionally, antiporter specific for GDP-l-fucose and depending on the concomitant reverse transport of GMP. Involved in GDP-fucose import from the cytoplasm into the Golgi lumen. This chain is GDP-fucose transporter 1, found in Homo sapiens (Human).